The chain runs to 913 residues: DNA mismatch repair protein MutS (913 aa).

720-727 contributes to the ATP binding site; it reads GPNASGKS.

The protein belongs to the DNA mismatch repair MutS family.

In terms of biological role, this protein is involved in the repair of mismatches in DNA. It is possible that it carries out the mismatch recognition step. This protein has a weak ATPase activity. The chain is DNA mismatch repair protein MutS from Prochlorococcus marinus (strain MIT 9312).